Consider the following 314-residue polypeptide: Deoxymugineic acid synthase 1 (314 aa).

Position 44 (aspartate 44) interacts with NADP(+). Catalysis depends on tyrosine 49, which acts as the Proton donor. Histidine 112 provides a ligand contact to substrate. Residues 158–159, glutamine 180, 258–266, and 273–281 each bind NADP(+); these read CN, FDEGRMKEN, and ELSEEERQR.

It belongs to the aldo/keto reductase family.

It catalyses the reaction 2'-deoxymugineate + NAD(+) = 3''-deamino-3''-oxonicotianamine + NADH + H(+). The catalysed reaction is 2'-deoxymugineate + NADP(+) = 3''-deamino-3''-oxonicotianamine + NADPH + H(+). It functions in the pathway siderophore biosynthesis. Its function is as follows. Catalyzes the reduction of a 3''-keto intermediate during the biosynthesis of 2'-deoxymugineic acid (DMA) from L-Met. Involved in the formation of phytosiderophores (MAs) belonging to the mugineic acid family and required to acquire iron. The polypeptide is Deoxymugineic acid synthase 1 (Zea mays (Maize)).